A 410-amino-acid polypeptide reads, in one-letter code: MKEELLKRFTKYVKVDTQSNEESTVCPTTPGQMELANILVTELKEIGMQEVTVDEFGYVMATLPSNTTKEVPVIGFLAHLDTATDLTGKNVQPQVHENYDGKDIVLNKDLNVVLSPKQFPELADYKGKTLITTDGTTLLGADDKAGITEIMVAMNYLINHPEIKHGKIRVAFTPDEEIGRGPERFDVEAFGAKYAYTMDGGPLGELEYESFNAAGAKITFNGNSVHPGTAKNKMVNAVKMAMEFNARIPKDEAPEYTEGYEGFYHLISLNGDVEQAKAYYIIRDFDHLKFVERKTHIASIAKELEEKYGEGSVELKLNDQYYNMREKIEPVKEIVDIVSAAMRNLDIEPKISPIRGGTDGAQLSYKGLPTPNIFGGGENFHGKFEYVALESMVKATEVIIEVARLFEEKE.

His-79 lines the Zn(2+) pocket. Residue Asp-81 is part of the active site. Asp-142 contributes to the Zn(2+) binding site. Catalysis depends on Glu-176, which acts as the Proton acceptor. Residues Glu-177, Asp-199, and His-381 each contribute to the Zn(2+) site.

The protein belongs to the peptidase M20B family. Zn(2+) serves as cofactor.

It is found in the cytoplasm. The catalysed reaction is Release of the N-terminal residue from a tripeptide.. Functionally, cleaves the N-terminal amino acid of tripeptides. This chain is Peptidase T, found in Listeria monocytogenes serotype 4a (strain HCC23).